A 191-amino-acid polypeptide reads, in one-letter code: Molybdenum cofactor guanylyltransferase (191 aa).

Residues 11–13 (LCG), Lys-23, Asp-66, and Asp-97 each bind GTP. A Mg(2+)-binding site is contributed by Asp-97.

The protein belongs to the MobA family. In terms of assembly, monomer. Mg(2+) is required as a cofactor.

It localises to the cytoplasm. The catalysed reaction is Mo-molybdopterin + GTP + H(+) = Mo-molybdopterin guanine dinucleotide + diphosphate. Its function is as follows. Transfers a GMP moiety from GTP to Mo-molybdopterin (Mo-MPT) cofactor (Moco or molybdenum cofactor) to form Mo-molybdopterin guanine dinucleotide (Mo-MGD) cofactor. This Campylobacter jejuni subsp. doylei (strain ATCC BAA-1458 / RM4099 / 269.97) protein is Molybdenum cofactor guanylyltransferase.